A 298-amino-acid chain; its full sequence is uncharacterized protein (298 aa).

Helical transmembrane passes span Val10–Leu30, Leu36–Phe56, Ile76–Ala96, Phe101–Ile121, Gly142–Phe162, Ala179–Phe199, Gly212–Ala232, Val243–His263, and Ala271–Trp291. 2 EamA domains span residues Phe17–Phe148 and Phe162–Phe286.

Belongs to the EamA transporter family.

Its subcellular location is the cell membrane. This is an uncharacterized protein from Bacillus subtilis (strain 168).